The sequence spans 608 residues: Threonine--tRNA ligase (608 aa).

Residues 1-145 form an editing domain region; sequence MKTLLIHAKH…TIKPGRRVRP (145 aa). Catalytic stretches follow at residues 192–489 and 193–489; these read PKYL…PSLP and KYLE…PSLP. Zn(2+) is bound by residues cysteine 286, histidine 337, and histidine 458.

The protein belongs to the class-II aminoacyl-tRNA synthetase family. In terms of assembly, homodimer. It depends on Zn(2+) as a cofactor.

It is found in the cytoplasm. The enzyme catalyses tRNA(Thr) + L-threonine + ATP = L-threonyl-tRNA(Thr) + AMP + diphosphate + H(+). In terms of biological role, catalyzes the attachment of threonine to tRNA(Thr) in a two-step reaction: L-threonine is first activated by ATP to form Thr-AMP and then transferred to the acceptor end of tRNA(Thr). Also edits incorrectly charged L-seryl-tRNA(Thr). The chain is Threonine--tRNA ligase from Thermofilum pendens (strain DSM 2475 / Hrk 5).